We begin with the raw amino-acid sequence, 425 residues long: MDRSIMPIDSPARDKPPDELVWPLRLFLILLGYSTVATPAAILIYYVRRNRHAFETPYLSIRLLLRSFAVGNPEYQLIPTGEKQARKENDSIPQTRAQCINVIILLLFFFSGIQVTLVAMGVLQERIITRGYRRSDQLEVEDKFGETQFLIFCNRIVALVLSLMILAKDWTKQPPHVPPLYVHSYTSFSNTISSWCQYEALKYVSFPTQTICKASKVVVTMLMGRLVRGQRYSWFEYGCGCTIAFGASLFLLSSSSKGAGSTITYTSFSGMILMAGYLLFDAFTLNWQKALFDTKPKVSKYQMMFGVNFFSAILCAVSLIEQGTLWSSIKFGAEHVDFSRDVFLLSLSGAIGQIFIYSTIERFGPIVFAVIMTIRQMLSIVLSTIMYGHELTFLAAIGFMIVFAAIFVDIHKKYSDKSRGPQRSW.

Helical transmembrane passes span 27 to 47 (FLIL…IYYV), 102 to 122 (VIIL…AMGV), 147 to 167 (TQFL…MILA), 232 to 252 (YSWF…LFLL), 263 to 283 (ITYT…FDAF), 303 to 323 (MMFG…IEQG), 342 to 360 (VFLL…YSTI), 365 to 387 (PIVF…TIMY), and 391 to 411 (LTFL…VDIH).

It belongs to the nucleotide-sugar transporter family. SLC35B subfamily.

Its subcellular location is the golgi apparatus membrane. Its function is as follows. Mediates the transport of adenosine 3'-phospho 5'-phosphosulfate (PAPS), from cytosol into Golgi. PAPS is a universal sulfuryl donor for sulfation events that take place in the Golgi. The chain is Adenosine 3'-phospho 5'-phosphosulfate transporter 1 (pst-1) from Caenorhabditis elegans.